We begin with the raw amino-acid sequence, 1132 residues long: Protein sel-1 homolog 3 (1132 aa).

Residues Met1 to Gly24 form a disordered region. Asn201, Asn382, and Asn527 each carry an N-linked (GlcNAc...) asparagine glycan. Sel1-like repeat units lie at residues Tyr575 to Ser609, Asn611 to Thr647, Arg694 to Ile730, Asp732 to Asn767, Gly768 to Tyr800, Asn801 to Leu839, and Trp840 to Val877. Ser608 carries the phosphoserine modification. A glycan (N-linked (GlcNAc...) asparagine) is linked at Asn937. The stretch at Lys952–Phe988 is one Sel1-like 8 repeat. A helical transmembrane segment spans residues Ile1057–Trp1077. The segment at Ala1087–Gly1132 is disordered. A compositionally biased stretch (low complexity) spans Ala1097–Ala1116. Over residues Gln1119–Gly1132 the composition is skewed to polar residues.

It is found in the membrane. The polypeptide is Protein sel-1 homolog 3 (SEL1L3) (Homo sapiens (Human)).